A 226-amino-acid chain; its full sequence is Lipoprotein signal peptidase (226 aa).

Helical transmembrane passes span 12-32 (KVVA…KIWV), 69-89 (FLSL…AKLV), and 103-123 (SLII…GVIF). Residues Asp-150 and Asp-184 contribute to the active site. Residues 173–193 (FVFFHPVFNFADSCISIGLIL) form a helical membrane-spanning segment.

It belongs to the peptidase A8 family.

The protein localises to the cell inner membrane. The catalysed reaction is Release of signal peptides from bacterial membrane prolipoproteins. Hydrolyzes -Xaa-Yaa-Zaa-|-(S,diacylglyceryl)Cys-, in which Xaa is hydrophobic (preferably Leu), and Yaa (Ala or Ser) and Zaa (Gly or Ala) have small, neutral side chains.. It functions in the pathway protein modification; lipoprotein biosynthesis (signal peptide cleavage). Its function is as follows. This protein specifically catalyzes the removal of signal peptides from prolipoproteins. The polypeptide is Lipoprotein signal peptidase (Porphyromonas gingivalis (strain ATCC 33277 / DSM 20709 / CIP 103683 / JCM 12257 / NCTC 11834 / 2561)).